A 165-amino-acid chain; its full sequence is Phosphopantetheine adenylyltransferase (165 aa).

Residue T10 participates in substrate binding. Residues 10 to 11 (TF) and H18 contribute to the ATP site. Substrate is bound by residues K42, L75, and R89. ATP-binding positions include 90-92 (GVR), E100, and 125-131 (YTYVAST).

Belongs to the bacterial CoaD family. As to quaternary structure, homohexamer. It depends on Mg(2+) as a cofactor.

The protein resides in the cytoplasm. It carries out the reaction (R)-4'-phosphopantetheine + ATP + H(+) = 3'-dephospho-CoA + diphosphate. The protein operates within cofactor biosynthesis; coenzyme A biosynthesis; CoA from (R)-pantothenate: step 4/5. Functionally, reversibly transfers an adenylyl group from ATP to 4'-phosphopantetheine, yielding dephospho-CoA (dPCoA) and pyrophosphate. The polypeptide is Phosphopantetheine adenylyltransferase (Chlorobaculum tepidum (strain ATCC 49652 / DSM 12025 / NBRC 103806 / TLS) (Chlorobium tepidum)).